The following is an 896-amino-acid chain: Protein translocase subunit SecA (896 aa).

ATP contacts are provided by residues Gln-87, 105 to 109 (GEGKT), and Asp-512. Residues 867-889 (QEPARSNRVAGRNDPCPCGSGKK) are disordered. Cys-882, Cys-884, Cys-893, and Cys-894 together coordinate Zn(2+).

This sequence belongs to the SecA family. Monomer and homodimer. Part of the essential Sec protein translocation apparatus which comprises SecA, SecYEG and auxiliary proteins SecDF-YajC and YidC. Requires Zn(2+) as cofactor.

The protein localises to the cell inner membrane. It localises to the cytoplasm. The catalysed reaction is ATP + H2O + cellular proteinSide 1 = ADP + phosphate + cellular proteinSide 2.. Functionally, part of the Sec protein translocase complex. Interacts with the SecYEG preprotein conducting channel. Has a central role in coupling the hydrolysis of ATP to the transfer of proteins into and across the cell membrane, serving as an ATP-driven molecular motor driving the stepwise translocation of polypeptide chains across the membrane. The chain is Protein translocase subunit SecA from Pelobacter propionicus (strain DSM 2379 / NBRC 103807 / OttBd1).